Here is a 320-residue protein sequence, read N- to C-terminus: Aminoacyl tRNA synthase complex-interacting multifunctional protein 2 (320 aa).

A disordered region spans residues 31-51 (HSKTTSPATDAGHVQEPSEPS). Ser36 carries the phosphoserine modification. The interval 82–162 (TPDADLDVTN…HTHSSVKNVP (81 aa)) is interaction with PRKN. The tract at residues 162–225 (PENLLKCFGE…FLFSLFGQKH (64 aa)) is interaction with TP53. A GST C-terminal domain is found at 220–317 (LFGQKHNAVH…NLAPFSTALQ (98 aa)).

In terms of assembly, part of the multisynthetase complex (MSC), a multisubunit complex that groups tRNA ligases for Arg (RARS1), Asp (DARS1), Gln (QARS1), Ile (IARS1), Leu (LARS1), Lys (KARS1), Met (MARS1) the bifunctional ligase for Glu and Pro (EPRS1) and the auxiliary subunits AIMP1/p43, AIMP2/p38 and EEF1E1/p18. Interacts (via N-terminus) with KARS1. Interacts with EPRS1. Forms a linear complex that contains MARS1, EEF1E1, EPRS1 and AIMP2 that is at the core of the multisubunit complex. Binds FUBP1 (via C-terminus). Interacts in both its unphosphorylated and phosphorylated forms with p53/TP53 (via N-terminus) in the nucleus following UV irradiation. Interacts (via N-terminus) with PRKN/parkin (via first RING-type domain). Interacts with TARS3. Post-translationally, phosphorylated on serine residues in response to UV irradiation. Ubiquitinated by PRKN, leading to its degradation by the proteasome.

It is found in the cytoplasm. It localises to the cytosol. Its subcellular location is the nucleus. Required for assembly and stability of the aminoacyl-tRNA synthase complex. Mediates ubiquitination and degradation of FUBP1, a transcriptional activator of MYC, leading to MYC down-regulation which is required for aveolar type II cell differentiation. Blocks MDM2-mediated ubiquitination and degradation of p53/TP53. Functions as a proapoptotic factor. The protein is Aminoacyl tRNA synthase complex-interacting multifunctional protein 2 (Aimp2) of Rattus norvegicus (Rat).